Consider the following 261-residue polypeptide: uncharacterized protein (261 aa).

Residues methionine 1–glycine 22 form the signal peptide. Cysteine 23 carries the N-palmitoyl cysteine lipid modification. Cysteine 23 is lipidated: S-diacylglycerol cysteine.

Belongs to the staphylococcal tandem lipoprotein family.

The protein resides in the cell membrane. This is an uncharacterized protein from Staphylococcus aureus (strain N315).